An 89-amino-acid polypeptide reads, in one-letter code: Small ribosomal subunit protein uS15 (89 aa).

Belongs to the universal ribosomal protein uS15 family. In terms of assembly, part of the 30S ribosomal subunit. Forms a bridge to the 50S subunit in the 70S ribosome, contacting the 23S rRNA.

In terms of biological role, one of the primary rRNA binding proteins, it binds directly to 16S rRNA where it helps nucleate assembly of the platform of the 30S subunit by binding and bridging several RNA helices of the 16S rRNA. Functionally, forms an intersubunit bridge (bridge B4) with the 23S rRNA of the 50S subunit in the ribosome. This chain is Small ribosomal subunit protein uS15, found in Pseudomonas fluorescens (strain ATCC BAA-477 / NRRL B-23932 / Pf-5).